We begin with the raw amino-acid sequence, 127 residues long: MSYRKLQRTSSQRRALLRDLTTSLILNGRIETTEARAKEVRKTADQMITLGKQGDLHARRQAAAFIRNVVADVKEDGDDVVVTSALQKVFSELAPKYADRKGGYTRIMKTMPRRGDGAAMAILEFVD.

This sequence belongs to the bacterial ribosomal protein bL17 family. As to quaternary structure, part of the 50S ribosomal subunit. Contacts protein L32.

The polypeptide is Large ribosomal subunit protein bL17 (Levilactobacillus brevis (strain ATCC 367 / BCRC 12310 / CIP 105137 / JCM 1170 / LMG 11437 / NCIMB 947 / NCTC 947) (Lactobacillus brevis)).